A 440-amino-acid chain; its full sequence is Chromosome partition protein MukF (440 aa).

Residues 208-236 are leucine-zipper; sequence LSETSGTLRELQDTLDAAGDKLQANLLRI.

Belongs to the MukF family. As to quaternary structure, interacts, and probably forms a ternary complex, with MukE and MukB via its C-terminal region. The complex formation is stimulated by calcium or magnesium. It is required for an interaction between MukE and MukB.

It is found in the cytoplasm. It localises to the nucleoid. Involved in chromosome condensation, segregation and cell cycle progression. May participate in facilitating chromosome segregation by condensation DNA from both sides of a centrally located replisome during cell division. Not required for mini-F plasmid partitioning. Probably acts via its interaction with MukB and MukE. Overexpression results in anucleate cells. It has a calcium binding activity. This Klebsiella pneumoniae (strain 342) protein is Chromosome partition protein MukF.